Here is a 95-residue protein sequence, read N- to C-terminus: Small integral membrane protein 18 (95 aa).

The chain crosses the membrane as a helical span at residues 35–55 (CFVILLLFIFTVVSLVVLAFL).

The protein localises to the membrane. In Homo sapiens (Human), this protein is Small integral membrane protein 18 (SMIM18).